The following is a 194-amino-acid chain: Fe/S biogenesis protein NfuA (194 aa).

[4Fe-4S] cluster contacts are provided by cysteine 152 and cysteine 155.

The protein belongs to the NfuA family. Homodimer. It depends on [4Fe-4S] cluster as a cofactor.

In terms of biological role, involved in iron-sulfur cluster biogenesis. Binds a 4Fe-4S cluster, can transfer this cluster to apoproteins, and thereby intervenes in the maturation of Fe/S proteins. Could also act as a scaffold/chaperone for damaged Fe/S proteins. The chain is Fe/S biogenesis protein NfuA from Pseudomonas putida (strain GB-1).